A 197-amino-acid polypeptide reads, in one-letter code: 3-isopropylmalate dehydratase small subunit (197 aa).

Belongs to the LeuD family. LeuD type 1 subfamily. Heterodimer of LeuC and LeuD.

It catalyses the reaction (2R,3S)-3-isopropylmalate = (2S)-2-isopropylmalate. The protein operates within amino-acid biosynthesis; L-leucine biosynthesis; L-leucine from 3-methyl-2-oxobutanoate: step 2/4. Functionally, catalyzes the isomerization between 2-isopropylmalate and 3-isopropylmalate, via the formation of 2-isopropylmaleate. This is 3-isopropylmalate dehydratase small subunit from Geobacillus sp. (strain WCH70).